Here is an 87-residue protein sequence, read N- to C-terminus: Small ribosomal subunit protein uS17 (87 aa).

The protein belongs to the universal ribosomal protein uS17 family. As to quaternary structure, part of the 30S ribosomal subunit.

In terms of biological role, one of the primary rRNA binding proteins, it binds specifically to the 5'-end of 16S ribosomal RNA. This Staphylococcus haemolyticus (strain JCSC1435) protein is Small ribosomal subunit protein uS17.